Reading from the N-terminus, the 483-residue chain is E3 ubiquitin-protein ligase TRIM50 (483 aa).

The RING-type zinc finger occupies 16-57; that stretch reads CPICLEVFKEPLMLQCGHSYCKNCLDSLSEHLDSELRCPVCR. The segment at 84 to 125 adopts a B box-type zinc-finger fold; that stretch reads TEPTVCVHHRNPLSLFCEKDQEFICGLCGLLGSHQHHRVTPV. The Zn(2+) site is built by Cys89, His92, Cys111, and His117. Coiled coils occupy residues 127–169 and 203–236; these read TVYS…NESD and GLVA…GNES. Residues 275-474 enclose the B30.2/SPRY domain; the sequence is DIKLTVWKRL…LPMVLPPPSA (200 aa). Position 372 is an N6-acetyllysine (Lys372).

The protein belongs to the TRIM/RBCC family. In terms of assembly, can form dimers and trimers. Interacts with several E2 ubiquitin-conjugating enzymes, including UBE2L6, UBE2E1, UBE2E3. No interaction with UBE2H. Interacts with BECN1. Interacts with SQSTM1. Interacts with NLRP3. In terms of processing, auto-ubiquitinated. Acetylated by EP300 and KAT2B. HDAC6 drives TRIM50 deacetylation. Acetylation antagonizes with TRIM50 ubiquitination.

The protein localises to the cytoplasm. It catalyses the reaction S-ubiquitinyl-[E2 ubiquitin-conjugating enzyme]-L-cysteine + [acceptor protein]-L-lysine = [E2 ubiquitin-conjugating enzyme]-L-cysteine + N(6)-ubiquitinyl-[acceptor protein]-L-lysine.. Its function is as follows. E3 ubiquitin-protein ligase that ubiquitinates Beclin-1/BECN1 in a 'Lys-63'-dependent manner enhancing its binding to ULK1. In turn, promotes starvation-induced autophagy activation. Also interacts with p62/SQSTM1 protein and thereby induces the formation and the autophagy clearance of aggresome-associated polyubiquitinated proteins through HDAC6 interaction. Also promotes NLRP3 inflammasome activation by directly inducing NLRP3 oligomerization independent of its E3 ligase function. The sequence is that of E3 ubiquitin-protein ligase TRIM50 (Trim50) from Rattus norvegicus (Rat).